Here is a 217-residue protein sequence, read N- to C-terminus: Small ribosomal subunit protein uS3 (217 aa).

Residues 38-106 (IRKFVQKELA…QVHINIIEIK (69 aa)) enclose the KH type-2 domain.

It belongs to the universal ribosomal protein uS3 family. Part of the 30S ribosomal subunit. Forms a tight complex with proteins S10 and S14.

Binds the lower part of the 30S subunit head. Binds mRNA in the 70S ribosome, positioning it for translation. This chain is Small ribosomal subunit protein uS3, found in Streptococcus pneumoniae serotype 19F (strain G54).